A 585-amino-acid chain; its full sequence is Aspartate--tRNA(Asp/Asn) ligase (585 aa).

Glu175 is a binding site for L-aspartate. The tract at residues Gln199–Lys202 is aspartate. Arg221 serves as a coordination point for L-aspartate. ATP contacts are provided by residues Arg221–Glu223 and Gln230. Residue His448 coordinates L-aspartate. Glu482 is an ATP binding site. An L-aspartate-binding site is contributed by Arg489. Gly534–Arg537 provides a ligand contact to ATP.

Belongs to the class-II aminoacyl-tRNA synthetase family. Type 1 subfamily. In terms of assembly, homodimer.

The protein localises to the cytoplasm. It carries out the reaction tRNA(Asx) + L-aspartate + ATP = L-aspartyl-tRNA(Asx) + AMP + diphosphate. In terms of biological role, aspartyl-tRNA synthetase with relaxed tRNA specificity since it is able to aspartylate not only its cognate tRNA(Asp) but also tRNA(Asn). Reaction proceeds in two steps: L-aspartate is first activated by ATP to form Asp-AMP and then transferred to the acceptor end of tRNA(Asp/Asn). The protein is Aspartate--tRNA(Asp/Asn) ligase of Natranaerobius thermophilus (strain ATCC BAA-1301 / DSM 18059 / JW/NM-WN-LF).